The sequence spans 546 residues: Beta-amylase (546 aa).

The first 30 residues, 1 to 30, serve as a signal peptide directing secretion; that stretch reads MKNQFQYCCIVILSVVMLFVSLLIPQASSA. Residue Asp-79 coordinates substrate. Ca(2+)-binding residues include Glu-86, Asp-90, and Gln-91. Substrate is bound by residues His-119 and Asp-127. A disulfide bridge links Cys-121 with Cys-129. Ca(2+)-binding residues include Glu-171 and Glu-174. The active-site Proton donor is the Glu-202. Residues Lys-317, His-322, and Thr-360 each contribute to the substrate site. Glu-397 acts as the Proton acceptor in catalysis. Residues 398-399 and Arg-427 contribute to the substrate site; that span reads NA. In terms of domain architecture, CBM20 spans 444 to 546; it reads LLGVTPVMQT…LKTTSHTSSW (103 aa).

This sequence belongs to the glycosyl hydrolase 14 family. As to quaternary structure, monomer. Ca(2+) is required as a cofactor.

It carries out the reaction Hydrolysis of (1-&gt;4)-alpha-D-glucosidic linkages in polysaccharides so as to remove successive maltose units from the non-reducing ends of the chains.. The polypeptide is Beta-amylase (spoII) (Bacillus cereus).